A 324-amino-acid chain; its full sequence is Galactosylgalactosylxylosylprotein 3-beta-glucuronosyltransferase 2 (324 aa).

Topologically, residues 1-2 (MK) are cytoplasmic. A helical; Signal-anchor for type II membrane protein transmembrane segment spans residues 3-23 (SALCSRFFILLPWILIVIIML). Topologically, residues 24–324 (DVDPRRPAPQ…YHLDTVNIEV (301 aa)) are lumenal. The interval 50–78 (SRVPLRRSSPGRDAAEKRNESRPQLQPEP) is disordered. Asn-68 is a glycosylation site (N-linked (GlcNAc...) asparagine). UDP-alpha-D-glucuronate is bound by residues 88–90 (PTY), Asp-119, Arg-156, Arg-161, and 186–188 (DDD). Asp-188 serves as a coordination point for Mn(2+). The interval 235-244 (WREDRPFAID) is interaction with galactose moiety of substrate glycoprotein. The active-site Proton donor/acceptor is the Glu-274. Asn-293 is a glycosylation site (N-linked (GlcNAc...) asparagine). 301-303 (HTR) is a UDP-alpha-D-glucuronate binding site.

The protein belongs to the glycosyltransferase 43 family. Homodimer. Mn(2+) serves as cofactor. In terms of tissue distribution, expressed in brain, but not in liver and kidney.

Its subcellular location is the golgi apparatus membrane. The enzyme catalyses 3-O-(beta-D-galactosyl-(1-&gt;3)-beta-D-galactosyl-(1-&gt;4)-beta-D-xylosyl)-L-seryl-[protein] + UDP-alpha-D-glucuronate = 3-O-(beta-D-GlcA-(1-&gt;3)-beta-D-Gal-(1-&gt;3)-beta-D-Gal-(1-&gt;4)-beta-D-Xyl)-L-seryl-[protein] + UDP + H(+). The protein operates within protein modification; protein glycosylation. Involved in the biosynthesis of L2/HNK-1 carbohydrate epitope on both glycolipids and glycoproteins. In Mus musculus (Mouse), this protein is Galactosylgalactosylxylosylprotein 3-beta-glucuronosyltransferase 2 (B3gat2).